A 201-amino-acid chain; its full sequence is Holliday junction resolvase RecU (201 aa).

Threonine 87, aspartate 89, glutamate 102, and glutamine 121 together coordinate Mg(2+).

It belongs to the RecU family. Mg(2+) is required as a cofactor.

It is found in the cytoplasm. It carries out the reaction Endonucleolytic cleavage at a junction such as a reciprocal single-stranded crossover between two homologous DNA duplexes (Holliday junction).. In terms of biological role, endonuclease that resolves Holliday junction intermediates in genetic recombination. Cleaves mobile four-strand junctions by introducing symmetrical nicks in paired strands. Promotes annealing of linear ssDNA with homologous dsDNA. Required for DNA repair, homologous recombination and chromosome segregation. The polypeptide is Holliday junction resolvase RecU (Listeria monocytogenes serotype 4b (strain F2365)).